The following is a 212-amino-acid chain: Ribosome maturation factor RimP (212 aa).

The protein belongs to the RimP family.

It localises to the cytoplasm. In terms of biological role, required for maturation of 30S ribosomal subunits. This Variovorax paradoxus (strain S110) protein is Ribosome maturation factor RimP.